Consider the following 246-residue polypeptide: 1-(5-phosphoribosyl)-5-[(5-phosphoribosylamino)methylideneamino] imidazole-4-carboxamide isomerase (246 aa).

The active-site Proton acceptor is the Asp12. The active-site Proton donor is the Asp134.

Belongs to the HisA/HisF family.

The protein resides in the cytoplasm. The enzyme catalyses 1-(5-phospho-beta-D-ribosyl)-5-[(5-phospho-beta-D-ribosylamino)methylideneamino]imidazole-4-carboxamide = 5-[(5-phospho-1-deoxy-D-ribulos-1-ylimino)methylamino]-1-(5-phospho-beta-D-ribosyl)imidazole-4-carboxamide. Its pathway is amino-acid biosynthesis; L-histidine biosynthesis; L-histidine from 5-phospho-alpha-D-ribose 1-diphosphate: step 4/9. The protein is 1-(5-phosphoribosyl)-5-[(5-phosphoribosylamino)methylideneamino] imidazole-4-carboxamide isomerase of Psychrobacter cryohalolentis (strain ATCC BAA-1226 / DSM 17306 / VKM B-2378 / K5).